The chain runs to 290 residues: GTPase Era (290 aa).

The Era-type G domain maps to 2–169 (KSGFAAILGR…KNKIYENFSE (168 aa)). Residues 10–17 (GRPSTGKS) form a G1 region. 10-17 (GRPSTGKS) contributes to the GTP binding site. The segment at 36–40 (QTTRN) is G2. Positions 57–60 (DTPG) are G3. GTP contacts are provided by residues 57–61 (DTPGF) and 119–122 (NKVD). The tract at residues 119 to 122 (NKVD) is G4. Positions 148–150 (ISA) are G5. Residues 200 to 276 (LKEELPYSLY…NLFLQVKLKK (77 aa)) enclose the KH type-2 domain.

This sequence belongs to the TRAFAC class TrmE-Era-EngA-EngB-Septin-like GTPase superfamily. Era GTPase family. As to quaternary structure, monomer.

It is found in the cytoplasm. The protein localises to the cell inner membrane. Its function is as follows. An essential GTPase that binds both GDP and GTP, with rapid nucleotide exchange. Plays a role in 16S rRNA processing and 30S ribosomal subunit biogenesis and possibly also in cell cycle regulation and energy metabolism. This chain is GTPase Era, found in Borreliella afzelii (strain PKo) (Borrelia afzelii).